The sequence spans 174 residues: MERQCSTKSQSWCVRTAEDEENNFMMICRKGNVYELMELAPFISVDGHLLHKYDHRGRQCIHMVALYDRKNAIMKIEILVNMGADINARERNTGNSLLHIAVKTKNYELAEWLCREPTVNLGAINYEHHTAYHMAYYLHDEKMKELLITNRAVCDNPEGIKMSEDDISDFSSDN.

ANK repeat units lie at residues 56–88 (RGRQ…DINA) and 93–123 (TGNS…NLGA).

It belongs to the polydnaviridae I-Kappa-B-like protein family.

In terms of biological role, suppresses the host immune response through NF-kappa-B inactivation. Possesses ankyrin repeat domains required for NF-kappa-B binding but lacks the regulatory regions required for dissociation from NF-kappa-B and degradation. Therefore, prevents host NF-kappa-B release and subsequent activation. This chain is I-Kappa-B like protein C1 (C1), found in Microplitis demolitor bracovirus (isolate Webb) (MdBV).